The following is a 423-amino-acid chain: Acetylornithine aminotransferase, mitochondrial (423 aa).

Position 276 is an N6-(pyridoxal phosphate)lysine (Lys276).

It belongs to the class-III pyridoxal-phosphate-dependent aminotransferase family. Pyridoxal 5'-phosphate serves as cofactor.

Its subcellular location is the mitochondrion matrix. It catalyses the reaction N(2)-acetyl-L-ornithine + 2-oxoglutarate = N-acetyl-L-glutamate 5-semialdehyde + L-glutamate. It functions in the pathway amino-acid biosynthesis; L-arginine biosynthesis; N(2)-acetyl-L-ornithine from L-glutamate: step 4/4. The sequence is that of Acetylornithine aminotransferase, mitochondrial (ARG8) from Eremothecium gossypii (strain ATCC 10895 / CBS 109.51 / FGSC 9923 / NRRL Y-1056) (Yeast).